A 783-amino-acid polypeptide reads, in one-letter code: DNA ligase (783 aa).

Residues 42–46, 91–92, and Glu125 each bind NAD(+); these read DAEYD and SL. The active-site N6-AMP-lysine intermediate is the Lys127. NAD(+) is bound by residues Arg148, Glu185, Lys302, and Lys326. Residues Cys421, Cys423, Cys445, and Cys451 each contribute to the Zn(2+) site. Positions 705–783 constitute a BRCT domain; it reads KTDTAVAGKT…EDEWLELVAG (79 aa).

It belongs to the NAD-dependent DNA ligase family. LigA subfamily. Requires Mg(2+) as cofactor. Mn(2+) serves as cofactor.

It carries out the reaction NAD(+) + (deoxyribonucleotide)n-3'-hydroxyl + 5'-phospho-(deoxyribonucleotide)m = (deoxyribonucleotide)n+m + AMP + beta-nicotinamide D-nucleotide.. Functionally, DNA ligase that catalyzes the formation of phosphodiester linkages between 5'-phosphoryl and 3'-hydroxyl groups in double-stranded DNA using NAD as a coenzyme and as the energy source for the reaction. It is essential for DNA replication and repair of damaged DNA. The protein is DNA ligase of Caulobacter vibrioides (strain ATCC 19089 / CIP 103742 / CB 15) (Caulobacter crescentus).